Reading from the N-terminus, the 138-residue chain is Putative pre-16S rRNA nuclease (138 aa).

This sequence belongs to the YqgF nuclease family.

Its subcellular location is the cytoplasm. Its function is as follows. Could be a nuclease involved in processing of the 5'-end of pre-16S rRNA. In Salmonella typhimurium (strain LT2 / SGSC1412 / ATCC 700720), this protein is Putative pre-16S rRNA nuclease.